The sequence spans 186 residues: Transcription factor HES-3 (186 aa).

The region spanning 1–49 (MEKKRRARINVSLEQLKSLLEKHYSHQIRKRKLEKADILELSVKYMRSL) is the bHLH domain. The Orange domain maps to 65–99 (QPSGFRSCLPGVSQLLRRGDEVGSGLRCPLVPESA). The disordered stretch occupies residues 128-186 (APAAGGPRSPPPLLLLPESLPGSSASVPPPQPASSRCAESPGLGLRVWRPWGSPGDDLN). Residues 142–153 (LLPESLPGSSAS) show a composition bias toward low complexity. The short motif at 175–178 (WRPW) is the WRPW motif element.

As to quaternary structure, transcription repression requires formation of a complex with a corepressor protein of the Groucho/TLE family.

It is found in the nucleus. In terms of biological role, transcriptional repressor of genes that require a bHLH protein for their transcription. This is Transcription factor HES-3 (HES3) from Homo sapiens (Human).